Here is a 347-residue protein sequence, read N- to C-terminus: tRNA N6-adenosine threonylcarbamoyltransferase (347 aa).

Fe cation-binding residues include H111 and H115. Substrate is bound by residues 134 to 138, D167, G180, and N277; that span reads LISGG. D305 contributes to the Fe cation binding site.

Belongs to the KAE1 / TsaD family. Fe(2+) serves as cofactor.

It is found in the cytoplasm. The enzyme catalyses L-threonylcarbamoyladenylate + adenosine(37) in tRNA = N(6)-L-threonylcarbamoyladenosine(37) in tRNA + AMP + H(+). Its function is as follows. Required for the formation of a threonylcarbamoyl group on adenosine at position 37 (t(6)A37) in tRNAs that read codons beginning with adenine. Is involved in the transfer of the threonylcarbamoyl moiety of threonylcarbamoyl-AMP (TC-AMP) to the N6 group of A37, together with TsaE and TsaB. TsaD likely plays a direct catalytic role in this reaction. The sequence is that of tRNA N6-adenosine threonylcarbamoyltransferase from Actinobacillus pleuropneumoniae serotype 5b (strain L20).